The chain runs to 89 residues: Small ribosomal subunit protein uS15 (89 aa).

Belongs to the universal ribosomal protein uS15 family. In terms of assembly, part of the 30S ribosomal subunit. Forms a bridge to the 50S subunit in the 70S ribosome, contacting the 23S rRNA.

Its function is as follows. One of the primary rRNA binding proteins, it binds directly to 16S rRNA where it helps nucleate assembly of the platform of the 30S subunit by binding and bridging several RNA helices of the 16S rRNA. In terms of biological role, forms an intersubunit bridge (bridge B4) with the 23S rRNA of the 50S subunit in the ribosome. This chain is Small ribosomal subunit protein uS15, found in Bartonella quintana (strain Toulouse) (Rochalimaea quintana).